Here is a 147-residue protein sequence, read N- to C-terminus: Submaxillary gland androgen-regulated protein 3A (147 aa).

An N-terminal signal peptide occupies residues Met1–Cys22. Residues Arg27 to Asp128 are disordered. A compositionally biased stretch (pro residues) spans Gly33–Pro105. Repeat copies occupy residues Gly43–Phe54, Gly55–Phe66, and Gly67–Pro78. The segment at Gly43–Pro78 is 3 X 12 AA tandem repeats of G-P-G-I-G-R-P-[HP]-P-P-P-[PF]. Over residues Thr108–Arg127 the composition is skewed to polar residues.

It belongs to the PROL1/PROL3 family. In terms of tissue distribution, secreted into saliva by submaxillary gland.

It is found in the secreted. Functionally, may play a role in protection or detoxification. This chain is Submaxillary gland androgen-regulated protein 3A (Smr3a), found in Mus musculus (Mouse).